The chain runs to 414 residues: COUP transcription factor 2 (414 aa).

A disordered region spans residues 1–72; that stretch reads MAMVVSTWRD…PGGPGSDKQQ (72 aa). Residues 27 to 37 show a composition bias toward pro residues; that stretch reads PPVPGPPPGAP. Positions 38–57 are enriched in low complexity; the sequence is HTPQTPGQGGPASTPAQTAA. A Phosphothreonine modification is found at Thr51. Residues 58–67 are compositionally biased toward gly residues; the sequence is GGQGGPGGPG. Residues 76–151 constitute a DNA-binding region (nuclear receptor); sequence HIECVVCGDK…VGMRREAVQR (76 aa). NR C4-type zinc fingers lie at residues 79–99 and 115–139; these read CVVC…CEGC and CRAN…LKKC. An interaction with ZFPM2 region spans residues 117–414; sequence ANRNCPIDQH…SFNWPYMAIQ (298 aa). Positions 177-403 constitute an NR LBD domain; the sequence is YLSGYISLLL…TLIRDMLLSG (227 aa). The important for dimerization stretch occupies residues 337-414; sequence LQEKSQCALE…SFNWPYMAIQ (78 aa).

It belongs to the nuclear hormone receptor family. NR2 subfamily. As to quaternary structure, interacts with SQSTM1. Binds DNA as a dimer; homodimer or heterodimer with NR2F6. Interacts with NCOA1, NCOA2, NCOA3 and PPARGC1A. Interacts with ZFPM2. Ubiquitous. Expressed in the stromal cells of developing fetal ovaries.

It localises to the nucleus. Functionally, ligand-activated transcription factor. Activated by high concentrations of 9-cis-retinoic acid and all-trans-retinoic acid, but not by dexamethasone, cortisol or progesterone (in vitro). Regulation of the apolipoprotein A-I gene transcription. Binds to DNA site A. May be required to establish ovary identity during early gonad development. The protein is COUP transcription factor 2 (NR2F2) of Homo sapiens (Human).